The primary structure comprises 266 residues: MMVYNGSQLESVEEGEAVAVPGPPPEPRAPEPGAPVPEPGLDLSLSPRSESPGRGRPNCSPGRRKGRADRRGGARKGRQVRFLLAPPSPVRSGPPPAAASSSEKPEAPQDLGTPVQQSSLALSLELQAARAAAGGQFDAAKAVEEQLRKSFQTRCGLEESVTEGLNVPRSKRLFRDLVSLQVPEEQVLNAALREKLALLPPQARAPPPKEPPGPGPDMTILCDPETLFYESPHLTLEGLPPLRLQLRPRPSEDTFLMHRTLRRWEA.

Polar residues predominate over residues 1–10; sequence MMVYNGSQLE. The segment at 1–118 is disordered; sequence MMVYNGSQLE…QDLGTPVQQS (118 aa). A compositionally biased stretch (pro residues) spans 21-38; that stretch reads PGPPPEPRAPEPGAPVPE. Residues Ser46 and Ser51 each carry the phosphoserine modification. The segment covering 62 to 79 has biased composition (basic residues); sequence GRRKGRADRRGGARKGRQ. Residues 86 to 97 show a composition bias toward pro residues; the sequence is PPSPVRSGPPPA.

The protein belongs to the PPP1R35 family. Interacts with PPP1CA; this interaction mediates the PPP1CA phosphatase activity inhibition. Interacts with RTTN; this interaction allows the mutual recruitment to the centriole.

The protein resides in the cytoplasm. It is found in the cytoskeleton. Its subcellular location is the microtubule organizing center. The protein localises to the centrosome. It localises to the centriole. Its function is as follows. During centriole duplication, plays a role in the centriole elongation by promoting the recruitment of the microtubule-binding elongation machinery through its interaction with RTTN, leading to the centriole to centrosome conversion. In addition may play a role in the primary cilia assembly. In Bos taurus (Bovine), this protein is Protein phosphatase 1 regulatory subunit 35.